The sequence spans 380 residues: MLKLEQVSKVYKGGKKAVNSIDLDIAKGEFICFIGPSGCGKTTTMKMINRLIEPSSGRIFIDGENIMEQDPVELRRKIGYVIQQIGLFPHMTIQQNISLVPKLLKWPEEKRKERARELLKLVDMGPEYLDRYPHELSGGQQQRIGVLRALAAEPPLILMDEPFGALDPITRDSLQEEFKKLQRTLNKTIVFVTHDMDEAIKLADRIVILKAGEIVQVGTPDEILRNPANEFVEEFIGKERLIQSRPDIERVEQMMNRTPVTVSADKTLSQAIQLMREKRVDSLLVVDRQNVLKGYVDVEMIDQNRKKASIVGDVYRSDIYTVQKGALLRDTVRKILKQGIKYVPVVDEQNHLAGIVTRASLVDIVYDSIWGDEENQLMTI.

Residues 2 to 236 enclose the ABC transporter domain; the sequence is LKLEQVSKVY…PANEFVEEFI (235 aa). Residue 35 to 42 coordinates ATP; it reads GPSGCGKT. 2 CBS domains span residues 255–314 and 315–373; these read MNRT…VGDV and YRSD…WGDE.

Belongs to the ABC transporter superfamily. The complex is composed of two ATP-binding proteins (OpuCA), two transmembrane proteins (OpuCB and OpuCD) and a solute-binding protein (OpuCC).

Binds cyclic di-AMP (c-di-AMP), which may regulate the transporter activity. Involved in a high affinity multicomponent binding-protein-dependent transport system for glycine betaine, carnitine and choline; probably responsible for energy coupling to the transport system. This Bacillus subtilis (strain 168) protein is Glycine betaine/carnitine/choline transport ATP-binding protein OpuCA (opuCA).